The following is a 290-amino-acid chain: Putative phosphatase MPN_427 (290 aa).

Asp-16 serves as the catalytic Nucleophile. Asp-16 lines the Mg(2+) pocket. Leu-17 is a binding site for phosphate. Asp-18 is a binding site for Mg(2+). Residues 53 to 54 and Lys-216 contribute to the phosphate site; that span reads TG. The Mg(2+) site is built by Asp-239 and Ser-240. Asn-242 is a phosphate binding site.

The protein belongs to the HAD-like hydrolase superfamily. Cof family. Requires Mg(2+) as cofactor.

The polypeptide is Putative phosphatase MPN_427 (Mycoplasma pneumoniae (strain ATCC 29342 / M129 / Subtype 1) (Mycoplasmoides pneumoniae)).